A 604-amino-acid chain; its full sequence is Tyrosine-protein kinase transforming protein erbB (604 aa).

Positions 132–399 (FKKVKVLGSG…KMARDPPRYL (268 aa)) constitute a Protein kinase domain. ATP is bound by residues 138 to 146 (LGSGAFGTI) and Lys165. Asp257 functions as the Proton acceptor in the catalytic mechanism.

The protein belongs to the protein kinase superfamily. Tyr protein kinase family. EGF receptor subfamily.

The enzyme catalyses L-tyrosyl-[protein] + ATP = O-phospho-L-tyrosyl-[protein] + ADP + H(+). The v-erbB oncogene transforms avian fibroblasts and erythroblasts in culture and induces sarcomas and erythroleukemias in chickens. It is a truncated and mutated version of the receptor for epidermal growth factor. In Galliformes, this protein is Tyrosine-protein kinase transforming protein erbB (V-ERBB).